The chain runs to 301 residues: Probable alpha-L-glutamate ligase (301 aa).

The ATP-grasp domain maps to 104–287 (LQLLSRRGIG…VAGMIIEHLE (184 aa)). ATP is bound by residues Lys-141, 178-179 (EY), Asp-187, and 211-213 (RSN). Residues Asp-248, Glu-260, and Asn-262 each contribute to the Mg(2+) site. Mn(2+) contacts are provided by Asp-248, Glu-260, and Asn-262.

Belongs to the RimK family. It depends on Mg(2+) as a cofactor. The cofactor is Mn(2+).

The chain is Probable alpha-L-glutamate ligase from Pseudomonas putida (strain ATCC 700007 / DSM 6899 / JCM 31910 / BCRC 17059 / LMG 24140 / F1).